The primary structure comprises 209 residues: uncharacterized protein (209 aa).

An MPN domain is found at 1-67; it reads MEILPKYKPE…LIMYNYWTID (67 aa). Zn(2+) is bound by residues His17, His19, and Asp30. The JAMM motif motif lies at 17–30; sequence HTHPKGPAEPSIND.

This is an uncharacterized protein from Acidianus convivator (ATV).